The sequence spans 669 residues: Probable L-type lectin-domain containing receptor kinase I.2 (669 aa).

An N-terminal signal peptide occupies residues 1–24; that stretch reads MAQRFYLLLLLLIFLVNLICFSSQ. The Extracellular portion of the chain corresponds to 25–295; the sequence is QDLSFVFNGF…FTEQKRKRSP (271 aa). The segment at 26-266 is legume-lectin like; sequence DLSFVFNGFN…NQYILGWSFS (241 aa). N-linked (GlcNAc...) asparagine glycosylation is found at N132, N189, N212, and N233. Residues 296–316 form a helical membrane-spanning segment; sequence LLIVLLVILTLVVIGGLGGYY. The Cytoplasmic portion of the chain corresponds to 317 to 669; the sequence is LYRRKKYAEV…SHTILNGDGR (353 aa). A Protein kinase domain is found at 351–609; sequence FNKDGRLGKG…MQYINRDQAL (259 aa). Residues 357-365 and K379 contribute to the ATP site; that span reads LGKGGFGEV. D475 serves as the catalytic Proton acceptor.

This sequence in the C-terminal section; belongs to the protein kinase superfamily. Ser/Thr protein kinase family. It in the N-terminal section; belongs to the leguminous lectin family.

It is found in the cell membrane. It catalyses the reaction L-seryl-[protein] + ATP = O-phospho-L-seryl-[protein] + ADP + H(+). The catalysed reaction is L-threonyl-[protein] + ATP = O-phospho-L-threonyl-[protein] + ADP + H(+). Its function is as follows. Involved in resistance response to the pathogenic fungus Alternaria brassicicola. This is Probable L-type lectin-domain containing receptor kinase I.2 from Arabidopsis thaliana (Mouse-ear cress).